We begin with the raw amino-acid sequence, 442 residues long: UDP-N-acetylmuramate--L-alanine ligase (442 aa).

109–115 lines the ATP pocket; that stretch reads GAHGKTS.

This sequence belongs to the MurCDEF family.

The protein resides in the cytoplasm. It catalyses the reaction UDP-N-acetyl-alpha-D-muramate + L-alanine + ATP = UDP-N-acetyl-alpha-D-muramoyl-L-alanine + ADP + phosphate + H(+). The protein operates within cell wall biogenesis; peptidoglycan biosynthesis. In terms of biological role, cell wall formation. This is UDP-N-acetylmuramate--L-alanine ligase from Streptococcus pyogenes serotype M18 (strain MGAS8232).